Here is a 253-residue protein sequence, read N- to C-terminus: Imidazole glycerol phosphate synthase subunit HisF (253 aa).

Catalysis depends on residues Asp-11 and Asp-130.

The protein belongs to the HisA/HisF family. As to quaternary structure, heterodimer of HisH and HisF.

The protein localises to the cytoplasm. It catalyses the reaction 5-[(5-phospho-1-deoxy-D-ribulos-1-ylimino)methylamino]-1-(5-phospho-beta-D-ribosyl)imidazole-4-carboxamide + L-glutamine = D-erythro-1-(imidazol-4-yl)glycerol 3-phosphate + 5-amino-1-(5-phospho-beta-D-ribosyl)imidazole-4-carboxamide + L-glutamate + H(+). Its pathway is amino-acid biosynthesis; L-histidine biosynthesis; L-histidine from 5-phospho-alpha-D-ribose 1-diphosphate: step 5/9. Functionally, IGPS catalyzes the conversion of PRFAR and glutamine to IGP, AICAR and glutamate. The HisF subunit catalyzes the cyclization activity that produces IGP and AICAR from PRFAR using the ammonia provided by the HisH subunit. The polypeptide is Imidazole glycerol phosphate synthase subunit HisF (Acetivibrio thermocellus (strain ATCC 27405 / DSM 1237 / JCM 9322 / NBRC 103400 / NCIMB 10682 / NRRL B-4536 / VPI 7372) (Clostridium thermocellum)).